We begin with the raw amino-acid sequence, 385 residues long: MQPKDLAKKLFSEKFNRTSELNVYAPGRVNIIGEHTDYNDGFVMPCAINYGTAVSGAKRDDHTFCVYAADLDQFDRFRLDRPIEQNPSEKWTGYVRGVVKFIQERCPEFTQGADLVISGNVPLSSGLSSSASLEVAVGKFCQQLGELPLSNTDIALIGQKAENKFVGANCGNMDQLISALGQQDHLLMIDCRSLETKATPVPHNIAVMIVNSHVKHDLVTGEYNTRRQQCEAAAKFFGVKALRDVSIQQFKEKEAELTALDGEAAKRARHVVTENQRVLDAVDALNQGDISRLGELMGQSHDSMRDDFEITTPEIDYLVELAQQVIGKSGGARMTGGGFGGCIVAVAPVEKVEEVRKIIADNYQKRTGIKEDFYVCTASQGVHLC.

34–37 contributes to the substrate binding site; it reads EHTD. 124–130 is a binding site for ATP; the sequence is SSGLSSS. Residues S130 and E162 each coordinate Mg(2+). The active-site Proton acceptor is the D174. Y223 contributes to the substrate binding site.

Belongs to the GHMP kinase family. GalK subfamily.

It is found in the cytoplasm. The enzyme catalyses alpha-D-galactose + ATP = alpha-D-galactose 1-phosphate + ADP + H(+). The protein operates within carbohydrate metabolism; galactose metabolism. Catalyzes the transfer of the gamma-phosphate of ATP to D-galactose to form alpha-D-galactose-1-phosphate (Gal-1-P). This is Galactokinase from Mannheimia succiniciproducens (strain KCTC 0769BP / MBEL55E).